A 121-amino-acid chain; its full sequence is MIQPQTILQVADNSGARQLMCIRVLGGRKRYASIGDVIIAVVKDAIPNMPVKKSDVVRAVVVRTSKPVRRDTGMLIRFDDNAAVIVNQEGNPRGTRVFGPVARELRDRQFMKIISLAPEVL.

This sequence belongs to the universal ribosomal protein uL14 family. In terms of assembly, part of the 50S ribosomal subunit.

The protein resides in the plastid. Its subcellular location is the chloroplast. Binds to 23S rRNA. The sequence is that of Large ribosomal subunit protein uL14c from Nephroselmis olivacea (Green alga).